A 505-amino-acid chain; its full sequence is Flagellin (505 aa).

It belongs to the bacterial flagellin family.

It is found in the secreted. The protein resides in the bacterial flagellum. Flagellin is the subunit protein which polymerizes to form the filaments of bacterial flagella. This Salmonella budapest protein is Flagellin (fliC).